The following is a 553-amino-acid chain: Cytochrome P450 monooxygenase alnD (553 aa).

A helical membrane pass occupies residues 351 to 371 (LVGAGFVTSSAFLSWLIYSLV). Cys493 contacts heme. N-linked (GlcNAc...) asparagine glycosylation is present at Asn518.

It belongs to the cytochrome P450 family. The cofactor is heme.

It is found in the membrane. Its pathway is polyketide biosynthesis. Functionally, cytochrome P450 monooxygenase; part of the gene cluster that mediates the biosynthesis of asperlin, a polyketide showing anti-inflammatory, antitumor and antibiotic activities. The first step of the asperlin biosynthesis is the production of the intermediate 2,4,6-octatrienoic acid by the highly redusing polyketide synthase alnA with cleavage of the PKS product by the esterase alnB. 2,4,6-octatrienoic acid is further converted to asperlin via several steps involving the remaining enzymes from the cluster. This Emericella nidulans (strain FGSC A4 / ATCC 38163 / CBS 112.46 / NRRL 194 / M139) (Aspergillus nidulans) protein is Cytochrome P450 monooxygenase alnD.